Reading from the N-terminus, the 34-residue chain is Photosystem II reaction center protein M (34 aa).

The chain crosses the membrane as a helical span at residues 5–25 (ILALIAVALFISIPTAFLVII).

It belongs to the PsbM family. In terms of assembly, PSII is composed of 1 copy each of membrane proteins PsbA, PsbB, PsbC, PsbD, PsbE, PsbF, PsbH, PsbI, PsbJ, PsbK, PsbL, PsbM, PsbT, PsbX, PsbY, PsbZ, Psb30/Ycf12, at least 3 peripheral proteins of the oxygen-evolving complex and a large number of cofactors. It forms dimeric complexes.

It is found in the plastid. The protein resides in the chloroplast thylakoid membrane. Functionally, one of the components of the core complex of photosystem II (PSII). PSII is a light-driven water:plastoquinone oxidoreductase that uses light energy to abstract electrons from H(2)O, generating O(2) and a proton gradient subsequently used for ATP formation. It consists of a core antenna complex that captures photons, and an electron transfer chain that converts photonic excitation into a charge separation. This subunit is found at the monomer-monomer interface. This chain is Photosystem II reaction center protein M, found in Welwitschia mirabilis (Tree tumbo).